A 404-amino-acid chain; its full sequence is Exodeoxyribonuclease 7 large subunit (404 aa).

Belongs to the XseA family. Heterooligomer composed of large and small subunits.

It is found in the cytoplasm. The enzyme catalyses Exonucleolytic cleavage in either 5'- to 3'- or 3'- to 5'-direction to yield nucleoside 5'-phosphates.. Its function is as follows. Bidirectionally degrades single-stranded DNA into large acid-insoluble oligonucleotides, which are then degraded further into small acid-soluble oligonucleotides. The chain is Exodeoxyribonuclease 7 large subunit from Fusobacterium nucleatum subsp. nucleatum (strain ATCC 25586 / DSM 15643 / BCRC 10681 / CIP 101130 / JCM 8532 / KCTC 2640 / LMG 13131 / VPI 4355).